Consider the following 108-residue polypeptide: Thiosulfate sulfurtransferase GlpE (108 aa).

The region spanning 17–105 is the Rhodanese domain; the sequence is QEKEAVLVDI…WQRQFPAEVA (89 aa). The active-site Cysteine persulfide intermediate is the Cys65.

This sequence belongs to the GlpE family.

Its subcellular location is the cytoplasm. The catalysed reaction is thiosulfate + hydrogen cyanide = thiocyanate + sulfite + 2 H(+). It catalyses the reaction thiosulfate + [thioredoxin]-dithiol = [thioredoxin]-disulfide + hydrogen sulfide + sulfite + 2 H(+). Functionally, transferase that catalyzes the transfer of sulfur from thiosulfate to thiophilic acceptors such as cyanide or dithiols. May function in a CysM-independent thiosulfate assimilation pathway by catalyzing the conversion of thiosulfate to sulfite, which can then be used for L-cysteine biosynthesis. This is Thiosulfate sulfurtransferase GlpE from Escherichia coli O127:H6 (strain E2348/69 / EPEC).